A 393-amino-acid chain; its full sequence is Chalcone synthase 1 (393 aa).

Residue C166 is part of the active site.

The protein belongs to the thiolase-like superfamily. Chalcone/stilbene synthases family.

It carries out the reaction (E)-4-coumaroyl-CoA + 3 malonyl-CoA + 3 H(+) = 2',4,4',6'-tetrahydroxychalcone + 3 CO2 + 4 CoA. The protein operates within secondary metabolite biosynthesis; flavonoid biosynthesis. Functionally, the primary product of this enzyme is 4,2',4',6'-tetrahydroxychalcone (also termed naringenin-chalcone or chalcone) which can under specific conditions spontaneously isomerize into naringenin. This chain is Chalcone synthase 1 (CHS1), found in Ruta graveolens (Common rue).